The following is a 130-amino-acid chain: Small ribosomal subunit protein uS11 (130 aa).

It belongs to the universal ribosomal protein uS11 family. In terms of assembly, part of the 30S ribosomal subunit. Interacts with proteins S7 and S18. Binds to IF-3.

In terms of biological role, located on the platform of the 30S subunit, it bridges several disparate RNA helices of the 16S rRNA. Forms part of the Shine-Dalgarno cleft in the 70S ribosome. This chain is Small ribosomal subunit protein uS11, found in Dehalococcoides mccartyi (strain ATCC BAA-2100 / JCM 16839 / KCTC 5957 / BAV1).